A 90-amino-acid polypeptide reads, in one-letter code: Envelope protein US9 homolog (90 aa).

Over 1-63 (MEPLRLADAE…IRRRRRQTRA (63 aa)) the chain is Intravirion. Positions 12-13 (LL) match the Di-leucine internalization motif motif. An acidic region spans residues 29-38 (EAYYTESDDE). A helical; Signal-anchor for type II membrane protein membrane pass occupies residues 64 to 84 (AGFVAAFVLVALISGGLGALM). Over 85–90 (CWLAYR) the chain is Virion surface.

It belongs to the alphaherpesvirinae envelope protein US9 family. In terms of processing, phosphorylated on serines within the acidic cluster. Phosphorylation determines whether endocytosed viral US9 traffics to the trans-Golgi network or recycles to the cell membrane.

Its subcellular location is the virion membrane. It is found in the host Golgi apparatus membrane. The protein resides in the host smooth endoplasmic reticulum membrane. The protein localises to the host cell membrane. In terms of biological role, essential for the anterograde spread of the infection throughout the host nervous system. Together with the gE/gI heterodimer, US9 is involved in the sorting and transport of viral structural components toward axon tips. In Cercopithecine herpesvirus 1 (CeHV-1), this protein is Envelope protein US9 homolog.